Here is a 1133-residue protein sequence, read N- to C-terminus: Protein TOPLESS-RELATED PROTEIN 2 (1133 aa).

A LisH domain is found at 4–36; that stretch reads LSRELVFLILQFLDEEKFKETVHKLEQESAFYF. The 59-residue stretch at 34–92 folds into the CTLH domain; the sequence is FYFNMKHFEDLVQGGEWDEVEKYLSGFTKVEDNRYSMKIFFEIRKQKYLEALDRHDRAK. WD repeat units follow at residues 344–384, 451–492, 495–536, 539–582, 586–625, 630–669, 771–810, 838–876, 879–919, 922–961, 970–1011, and 1015–1054; these read NQGS…RIAH, AHIG…KQYT, GHEA…SRVD, APGH…IKRT, FRKR…ILTT, GGLP…RLLR, ATSS…RNPN, NPEE…VMTT, APPP…VKSK, GHSK…KKKS, RSGA…RSWS, and ALPA…LRCR. The tract at residues 1102 to 1133 is disordered; sequence DSDPKWGVAPPQDNGTHPTISAAPAAANKPEV.

As to quaternary structure, tetramer. Interacts with D53, probably via the EAR motifs. Binds to AP2-1/TOE1, AP2-3/SNB and AP2-2/IDS1. Interacts with WOX1. Interacts with MOF1. As to expression, expressed in stems and panicles. Detected in roots, seeds, leaves and sheath. Expressed in the meristem and lateral organ primordia.

The protein resides in the nucleus. Functionally, transcriptional corepressor involved in branch formation regulation, presumably by suppressing primary branch formation and promoting secondary branch formation. Required for the cell elongation in the first internode and pollen development. Probable downstream regulator of strigolactones signaling important in axillary meristem maintenance. Acts in auxin signaling and is associated with the regulation of histone deacetylation. Essential for the function of miR172 microRNA and its target genes in regulating panicle development. In Oryza sativa subsp. japonica (Rice), this protein is Protein TOPLESS-RELATED PROTEIN 2.